The primary structure comprises 200 residues: General odorant-binding protein 70 (200 aa).

An N-terminal signal peptide occupies residues 1 to 29 (MRRQYSMWASTVAVIACGSALMLLHPVGA). Disulfide bonds link Cys-105–Cys-174 and Cys-152–Cys-183.

Belongs to the PBP/GOBP family.

The protein localises to the secreted. Present in the aqueous fluid surrounding olfactory sensory dendrites and are thought to aid in the capture and transport of hydrophobic odorants into and through this fluid. In Anopheles gambiae (African malaria mosquito), this protein is General odorant-binding protein 70 (Obp70).